Here is a 217-residue protein sequence, read N- to C-terminus: Large ribosomal subunit protein eL14 (217 aa).

N6-acetyllysine is present on K79. N6-acetyllysine; alternate is present on K85. K85 carries the N6-succinyllysine; alternate modification. A Glycyl lysine isopeptide (Lys-Gly) (interchain with G-Cter in SUMO2) cross-link involves residue K124. S139 bears the Phosphoserine mark. A disordered region spans residues K162–A217. A 1-1; approximate repeat occupies K173 to G177. Residues K173 to P192 are 4 X 5 AA tandem repeats of Q-K-A-[APS]-X. A run of 5 repeats spans residues Q178 to A182, Q183 to G187, Q188 to P192, K195 to Q197, and K198 to Q200. The tract at residues K195–Q200 is 2 X 3 AA tandem repeats of K-G-Q. K206 is modified (N6-succinyllysine).

The protein belongs to the eukaryotic ribosomal protein eL14 family. In terms of assembly, component of the large ribosomal subunit.

The protein resides in the cytoplasm. Its function is as follows. Component of the large ribosomal subunit. The ribosome is a large ribonucleoprotein complex responsible for the synthesis of proteins in the cell. The sequence is that of Large ribosomal subunit protein eL14 (Rpl14) from Mus musculus (Mouse).